The chain runs to 262 residues: Acyl-[acyl-carrier-protein]--UDP-N-acetylglucosamine O-acyltransferase (262 aa).

This sequence belongs to the transferase hexapeptide repeat family. LpxA subfamily. In terms of assembly, homotrimer.

It localises to the cytoplasm. The catalysed reaction is a (3R)-hydroxyacyl-[ACP] + UDP-N-acetyl-alpha-D-glucosamine = a UDP-3-O-[(3R)-3-hydroxyacyl]-N-acetyl-alpha-D-glucosamine + holo-[ACP]. Its pathway is glycolipid biosynthesis; lipid IV(A) biosynthesis; lipid IV(A) from (3R)-3-hydroxytetradecanoyl-[acyl-carrier-protein] and UDP-N-acetyl-alpha-D-glucosamine: step 1/6. In terms of biological role, involved in the biosynthesis of lipid A, a phosphorylated glycolipid that anchors the lipopolysaccharide to the outer membrane of the cell. The protein is Acyl-[acyl-carrier-protein]--UDP-N-acetylglucosamine O-acyltransferase of Aliivibrio salmonicida (strain LFI1238) (Vibrio salmonicida (strain LFI1238)).